The sequence spans 426 residues: Bile acid CoA-transferase BaiF (426 aa).

Asp-168 serves as the catalytic Nucleophile.

Belongs to the CoA-transferase III family.

The enzyme catalyses lithocholoyl-CoA + cholate = choloyl-CoA + lithocholate. It carries out the reaction deoxycholoyl-CoA + cholate = choloyl-CoA + deoxycholate. The catalysed reaction is allodeoxycholoyl-CoA + cholate = allodeoxycholate + choloyl-CoA. It catalyses the reaction allocholate + deoxycholoyl-CoA = allocholoyl-CoA + deoxycholate. The enzyme catalyses allocholate + lithocholoyl-CoA = allocholoyl-CoA + lithocholate. It carries out the reaction allocholate + allodeoxycholoyl-CoA = allocholoyl-CoA + allodeoxycholate. The catalysed reaction is lithocholoyl-CoA + chenodeoxycholate = chenodeoxycholoyl-CoA + lithocholate. It catalyses the reaction ursodeoxycholate + deoxycholoyl-CoA = ursodeoxycholoyl-CoA + deoxycholate. The enzyme catalyses ursodeoxycholate + lithocholoyl-CoA = ursodeoxycholoyl-CoA + lithocholate. It carries out the reaction allodeoxycholoyl-CoA + ursodeoxycholate = ursodeoxycholoyl-CoA + allodeoxycholate. The catalysed reaction is beta-muricholate + lithocholoyl-CoA = beta-muricholoyl-CoA + lithocholate. It catalyses the reaction beta-muricholate + deoxycholoyl-CoA = beta-muricholoyl-CoA + deoxycholate. The enzyme catalyses beta-muricholate + allodeoxycholoyl-CoA = beta-muricholoyl-CoA + allodeoxycholate. It carries out the reaction choloyl-CoA + H2O = cholate + CoA + H(+). The catalysed reaction is chenodeoxycholoyl-CoA + H2O = chenodeoxycholate + CoA + H(+). It functions in the pathway lipid metabolism; bile acid biosynthesis. In terms of biological role, functions in the bile acid 7alpha-dehydroxylation pathway, which forms secondary bile acids via the 7alpha-dehydroxylation of primary bile acids, and is carried out by intestinal anaerobic bacteria. Acts as a bile acid CoA transferase with broad bile acid substrate specificity. Catalyzes the transfer of the CoA moiety of secondary bile acid-CoA compounds to primary bile acids. Can use lithocholoyl-CoA, deoxycholoyl-CoA and allodeoxycholoyl-CoA as bile acid CoA donors and cholate, allocholate, chenodeoxycholate, ursodeoxycholate, and beta-muricholate as bile acid CoA acceptors. Also displays CoA hydrolase activity, being able to catalyze the hydrolysis of choloyl-CoA, 3-dehydrocholoyl-CoA, and chenodeoxycholoyl-CoA, releasing CoA and the corresponding free bile acid. However, this latter activity may not represent the actual activity of this enzyme, since using a transferase rather than hydrolase, the bacteria conserve the thioester bond energy, saving ATP molecules. Shows no hydrolytic activity with acetyl-CoA, isovaleryl-CoA, palmitoyl-CoA, or phenylacetyl-CoA as substrates. The polypeptide is Bile acid CoA-transferase BaiF (Clostridium scindens (strain JCM 10418 / VPI 12708)).